A 180-amino-acid chain; its full sequence is LDLR chaperone boca (180 aa).

The N-terminal stretch at 1 to 18 (MQTRLVLLLLALTPLVLA) is a signal peptide. Residues 48-61 (QWEEDEEPLEDDEL) show a composition bias toward acidic residues. The tract at residues 48–78 (QWEEDEEPLEDDELPEHLRPQPKLDLSNLDS) is disordered. The structured core stretch occupies residues 93–166 (TLMTFVSVTG…QERCKGVTIE (74 aa)). Positions 177-180 (KDEL) match the Prevents secretion from ER motif.

The protein belongs to the MESD family. As to quaternary structure, monomer. Interacts with Arrow and Yolkless.

Its subcellular location is the endoplasmic reticulum. Chaperone specifically assisting the folding of beta-propeller/EGF modules within the family of low-density lipoprotein receptors (LDLRs). Acts as a modulator of the Wg pathway, since some LDLRs are coreceptors for the canonical Wnt pathway. The chain is LDLR chaperone boca (boca) from Drosophila melanogaster (Fruit fly).